The sequence spans 92 residues: Long neurotoxin 3FTx-Oxy1 (92 aa).

Positions 1-21 (MKTLLLTLVVVTIVCLDLGYT) are cleaved as a signal peptide. Disulfide bonds link C24-C42, C35-C63, C48-C52, C67-C79, and C80-C85.

Belongs to the three-finger toxin family. Long-chain subfamily. Type II alpha-neurotoxin sub-subfamily. Expressed by the venom gland.

The protein resides in the secreted. Functionally, binds with high affinity to muscular (alpha-1/CHRNA1) and neuronal (alpha-7/CHRNA7) nicotinic acetylcholine receptor (nAChR) and inhibits acetylcholine from binding to the receptor, thereby impairing neuromuscular and neuronal transmission. In Oxyuranus microlepidotus (Inland taipan), this protein is Long neurotoxin 3FTx-Oxy1.